Consider the following 122-residue polypeptide: Large ribosomal subunit protein bL12 (122 aa).

Residues 94 to 122 (GNVKEGLSKEDAEEMKEKLEEAGATVELK) are disordered. A compositionally biased stretch (basic and acidic residues) spans 99-114 (GLSKEDAEEMKEKLEE).

Belongs to the bacterial ribosomal protein bL12 family. Homodimer. Part of the ribosomal stalk of the 50S ribosomal subunit. Forms a multimeric L10(L12)X complex, where L10 forms an elongated spine to which 2 to 4 L12 dimers bind in a sequential fashion. Binds GTP-bound translation factors.

Forms part of the ribosomal stalk which helps the ribosome interact with GTP-bound translation factors. Is thus essential for accurate translation. This is Large ribosomal subunit protein bL12 from Halanaerobium praevalens.